The sequence spans 451 residues: Serine--tRNA ligase (451 aa).

258-260 provides a ligand contact to L-serine; the sequence is TSE. 289–291 is a binding site for ATP; that stretch reads RSE. E312 serves as a coordination point for L-serine. 376–379 serves as a coordination point for ATP; it reads EISS. S411 is an L-serine binding site.

This sequence belongs to the class-II aminoacyl-tRNA synthetase family. Type-1 seryl-tRNA synthetase subfamily. In terms of assembly, homodimer. The tRNA molecule binds across the dimer.

Its subcellular location is the cytoplasm. It catalyses the reaction tRNA(Ser) + L-serine + ATP = L-seryl-tRNA(Ser) + AMP + diphosphate + H(+). The enzyme catalyses tRNA(Sec) + L-serine + ATP = L-seryl-tRNA(Sec) + AMP + diphosphate + H(+). It participates in aminoacyl-tRNA biosynthesis; selenocysteinyl-tRNA(Sec) biosynthesis; L-seryl-tRNA(Sec) from L-serine and tRNA(Sec): step 1/1. Catalyzes the attachment of serine to tRNA(Ser). Is also able to aminoacylate tRNA(Sec) with serine, to form the misacylated tRNA L-seryl-tRNA(Sec), which will be further converted into selenocysteinyl-tRNA(Sec). The chain is Serine--tRNA ligase from Bordetella bronchiseptica (strain ATCC BAA-588 / NCTC 13252 / RB50) (Alcaligenes bronchisepticus).